Reading from the N-terminus, the 332-residue chain is Biotin synthase (332 aa).

In terms of domain architecture, Radical SAM core spans 53–282 (HFGKKVKLNM…TKEIRISGGR (230 aa)). [4Fe-4S] cluster contacts are provided by C71, C75, and C78. The [2Fe-2S] cluster site is built by C115, C147, C207, and R277.

Belongs to the radical SAM superfamily. Biotin synthase family. In terms of assembly, homodimer. [4Fe-4S] cluster is required as a cofactor. Requires [2Fe-2S] cluster as cofactor.

It catalyses the reaction (4R,5S)-dethiobiotin + (sulfur carrier)-SH + 2 reduced [2Fe-2S]-[ferredoxin] + 2 S-adenosyl-L-methionine = (sulfur carrier)-H + biotin + 2 5'-deoxyadenosine + 2 L-methionine + 2 oxidized [2Fe-2S]-[ferredoxin]. Its pathway is cofactor biosynthesis; biotin biosynthesis; biotin from 7,8-diaminononanoate: step 2/2. Its function is as follows. Catalyzes the conversion of dethiobiotin (DTB) to biotin by the insertion of a sulfur atom into dethiobiotin via a radical-based mechanism. This Bacillus cereus (strain B4264) protein is Biotin synthase.